Reading from the N-terminus, the 75-residue chain is UPF0352 protein ESA_01049 (75 aa).

This sequence belongs to the UPF0352 family.

In Cronobacter sakazakii (strain ATCC BAA-894) (Enterobacter sakazakii), this protein is UPF0352 protein ESA_01049.